The chain runs to 599 residues: Omega-hydroxyceramide transacylase (599 aa).

Residues 16-185 (ISFSGSGFLS…TSMQPCSFWT (170 aa)) enclose the PNPLA domain. The GXSXG signature appears at 51-55 (GTSAG). The Nucleophile role is filled by Ser-53. The active-site Proton acceptor is Asp-172. The DGA/G motif lies at 172 to 174 (DGG). The tract at residues 289–563 (PPPPSLQNLP…PASKLKSAPC (275 aa)) is disordered. Polar residues-rich tracts occupy residues 325 to 335 (SSAAPSVQTPE) and 350 to 362 (VSIS…SPLS). The segment covering 443–454 (SPESPRLLLRSS) has biased composition (low complexity). Positions 468–478 (PLSPSTPPAGP) are enriched in pro residues. Polar residues predominate over residues 490-501 (ATGSPALSQLTG). Low complexity predominate over residues 551–563 (SKKPASKLKSAPC).

Specifically expressed in skin by keratinocytes, at the boundary area between the nucleated stratum granulosum and the denucleated stratum corneum in the epidermis (at protein level). Also expressed in stomach and other surface lining tissues like intestine and tongue. Also detected in testis as well as in other tissues but at very low level.

Its subcellular location is the cytoplasm. The catalysed reaction is an N-(omega-hydroxy-ultra-long chain fatty acyl)-sphingoid base + a (9Z,12Z)-octadecadienoyl-containing triacyl-sn-glycerol = an N-[omega-(9Z,12Z-octadecadienoyloxy)-O-ultra-long chain fatty acyl]-sphingoid base + a diacylglycerol. It carries out the reaction an N-(omega-hydroxy-ultra-long chain fatty acyl)-sphing-4-enine + a (9Z,12Z)-octadecadienoyl-containing triacyl-sn-glycerol = an N-(omega-(9Z,12Z-octadecadienoyloxy)-ultra-long chain fatty acyl)-sphing-4-enine + a diacylglycerol. It catalyses the reaction N-(28-hydroxyoctacosanoyl)-sphing-4-enine + a (9Z,12Z)-octadecadienoyl-containing triacyl-sn-glycerol = N-(28-(9Z,12Z-octadecadienoyloxy)-octacosanoyl)-sphing-4-enine + a diacylglycerol. The enzyme catalyses N-(30-hydroxytriacontanoyl)-sphing-4-enine + 1,2,3-tri-(9Z,12Z)-octadecadienoylglycerol = N-[30-(9Z,12Z-octadecadienoyloxy)-triacontanoyl]-sphing-4-enine + di-(9Z,12Z)-octadecadienoylglycerol. The catalysed reaction is N-(32-hydroxydotriacontanoyl)-sphing-4-enine + a (9Z,12Z)-octadecadienoyl-containing triacyl-sn-glycerol = N-(32-(9Z,12Z-octadecadienoyloxy)-dotricontanoyl)-sphing-4-enine + a diacylglycerol. It carries out the reaction N-(32-hydroxydotriacontenoyl)-sphing-4-enine + a (9Z,12Z)-octadecadienoyl-containing triacyl-sn-glycerol = an N-(32-(9Z,12Z-octadecadienoyloxy)-dotriacontenoyl)-sphing-4-enine + a diacylglycerol. It catalyses the reaction an N-(34-hydroxytetratriacontenoyl)-sphing-4-enine + a (9Z,12Z)-octadecadienoyl-containing triacyl-sn-glycerol = an N-(34-(9Z,12Z-octadecadienoyloxy)-tetratriacontenoyl)-sphing-4-enine + a diacylglycerol. The enzyme catalyses an N-(34-hydroxytetratriacontadienoyl)-sphing-4-enine + a (9Z,12Z)-octadecadienoyl-containing triacyl-sn-glycerol = an N-(34-(9Z,12Z-octadecadienoyloxy)-tetratriacontadienoyl)-sphing-4-enine + a diacylglycerol. The catalysed reaction is an N-(36-hydroxyhexatriacontenoyl)-sphing-4-enine + a (9Z,12Z)-octadecadienoyl-containing triacyl-sn-glycerol = an N-(36-(9Z,12Z-octadecadienoyloxy)-hexatriacontenoyl)-sphing-4-enine + a diacylglycerol. It carries out the reaction an N-(36-hydroxyhexatriacontadienoyl)-sphing-4-enine + a (9Z,12Z)-octadecadienoyl-containing triacyl-sn-glycerol = an N-(36-(9Z,12Z-octadecadienoyloxy)-hexatriacontadienoyl)-sphing-4-enine + a diacylglycerol. It catalyses the reaction an N-(38-hydroxyoctatriacontenoyl)-sphing-4-enine + a (9Z,12Z)-octadecadienoyl-containing triacyl-sn-glycerol = an N-(38-(9Z,12Z-octadecadienoyloxy)-octatriacontenoyl)-sphing-4-enine + a diacylglycerol. Its function is as follows. Omega-hydroxyceramide transacylase involved in the synthesis of omega-O-acylceramides (esterified omega-hydroxyacyl-sphingosine; EOS), which are extremely hydrophobic lipids involved in skin barrier formation. Catalyzes the last step of the synthesis of omega-O-acylceramides by transferring linoleic acid from triglycerides to an omega-hydroxyceramide. Omega-O-acylceramides, are required for the biogenesis of lipid lamellae in the stratum corneum and the formation of the cornified lipid envelope which are essential for the epidermis barrier function. These lipids also play a role in keratinocyte differentiation. May also act on omega-hydroxylated ultra-long chain fatty acids (omega-OH ULCFA) and acylglucosylceramides (GlcEOS). This is Omega-hydroxyceramide transacylase from Mus musculus (Mouse).